Reading from the N-terminus, the 266-residue chain is Phage-like element PBSX protein XkdC (266 aa).

124-131 (GQPGSGKT) contacts ATP.

It to B.subtilis YqaM.

In terms of biological role, may function as a transcriptional antiterminator. The polypeptide is Phage-like element PBSX protein XkdC (xkdC) (Bacillus subtilis (strain 168)).